A 495-amino-acid polypeptide reads, in one-letter code: MTTRAKPSKLIKGATGDFEIVIGMEIHAQVTSRSKLFSGASTEFGGEPNAHVSLVDAAMPGMLPVINQECVAQAVRTGLGLEAQINLRSVFDRKNYFYPDLPQGYQISQYKSPIVGEGVVAVDVSPTEQIKVGIERLHLEQDAGKSLHDQSATESLVDLNRSGVALMEIVSKPDMRSSDEARAYVTKLRTILRYIGSCDGNMEQGSLRADVNVSVRRPGEPLGTRCEIKNVNSIRFIGQAIEVEARRQIGVIEDGGVVQQETRLFDPGRGETRSMRSKEEAHDYRYFPDPDLLPLEFDQAYVDGLKAGLPELPDAKKERFIAEYGLPAYDAGVLVADKETADYYEAAVRHGGAKRDPKLVANWLTGDVAAYANSVGLSVAQTHIKPGQIASLVDLIADGTISGKIAKDVLSILIAEEKDADPKDIVEARGLRQVTDTGAIAAAVDAIIKANPDKVAQAQAKPSMLGWFVGQVMKQTGGKANPQAVNDELKAKLGI.

The protein belongs to the GatB/GatE family. GatB subfamily. As to quaternary structure, heterotrimer of A, B and C subunits.

The catalysed reaction is L-glutamyl-tRNA(Gln) + L-glutamine + ATP + H2O = L-glutaminyl-tRNA(Gln) + L-glutamate + ADP + phosphate + H(+). The enzyme catalyses L-aspartyl-tRNA(Asn) + L-glutamine + ATP + H2O = L-asparaginyl-tRNA(Asn) + L-glutamate + ADP + phosphate + 2 H(+). Allows the formation of correctly charged Asn-tRNA(Asn) or Gln-tRNA(Gln) through the transamidation of misacylated Asp-tRNA(Asn) or Glu-tRNA(Gln) in organisms which lack either or both of asparaginyl-tRNA or glutaminyl-tRNA synthetases. The reaction takes place in the presence of glutamine and ATP through an activated phospho-Asp-tRNA(Asn) or phospho-Glu-tRNA(Gln). The sequence is that of Aspartyl/glutamyl-tRNA(Asn/Gln) amidotransferase subunit B from Methylocella silvestris (strain DSM 15510 / CIP 108128 / LMG 27833 / NCIMB 13906 / BL2).